A 383-amino-acid chain; its full sequence is tRNA(Met) cytidine acetate ligase (383 aa).

ATP is bound by residues 7–20 (IAEF…HEFL), Gly101, Asn153, and 178–179 (RI).

It belongs to the TmcAL family.

The protein resides in the cytoplasm. It catalyses the reaction cytidine(34) in elongator tRNA(Met) + acetate + ATP = N(4)-acetylcytidine(34) in elongator tRNA(Met) + AMP + diphosphate. Catalyzes the formation of N(4)-acetylcytidine (ac(4)C) at the wobble position of elongator tRNA(Met), using acetate and ATP as substrates. First activates an acetate ion to form acetyladenylate (Ac-AMP) and then transfers the acetyl group to tRNA to form ac(4)C34. This is tRNA(Met) cytidine acetate ligase from Lactobacillus acidophilus (strain ATCC 700396 / NCK56 / N2 / NCFM).